Reading from the N-terminus, the 215-residue chain is UPF0056 membrane protein BU267 (215 aa).

The next 6 helical transmembrane spans lie at 14 to 34 (FFIG…FTTM), 56 to 76 (LILL…GISI), 81 to 101 (IAGG…QFIK), 120 to 140 (VVPL…TIVW), 150 to 170 (LFLC…CFEA), and 189 to 209 (IMGL…IGAI).

Belongs to the UPF0056 (MarC) family.

The protein localises to the cell membrane. This Buchnera aphidicola subsp. Acyrthosiphon pisum (strain APS) (Acyrthosiphon pisum symbiotic bacterium) protein is UPF0056 membrane protein BU267.